A 984-amino-acid chain; its full sequence is Glycine dehydrogenase (decarboxylating) (984 aa).

The residue at position 702 (Lys-702) is an N6-(pyridoxal phosphate)lysine.

The protein belongs to the GcvP family. As to quaternary structure, the glycine cleavage system is composed of four proteins: P, T, L and H. The cofactor is pyridoxal 5'-phosphate.

The catalysed reaction is N(6)-[(R)-lipoyl]-L-lysyl-[glycine-cleavage complex H protein] + glycine + H(+) = N(6)-[(R)-S(8)-aminomethyldihydrolipoyl]-L-lysyl-[glycine-cleavage complex H protein] + CO2. Functionally, the glycine cleavage system catalyzes the degradation of glycine. The P protein binds the alpha-amino group of glycine through its pyridoxal phosphate cofactor; CO(2) is released and the remaining methylamine moiety is then transferred to the lipoamide cofactor of the H protein. The protein is Glycine dehydrogenase (decarboxylating) of Xanthomonas oryzae pv. oryzae (strain MAFF 311018).